We begin with the raw amino-acid sequence, 424 residues long: CinA-like protein (424 aa).

This sequence belongs to the CinA family.

This is CinA-like protein from Prochlorococcus marinus (strain MIT 9215).